Consider the following 314-residue polypeptide: Zinc-binding alcohol dehydrogenase domain-containing protein cipB (314 aa).

Belongs to the zinc-containing alcohol dehydrogenase family.

In terms of biological role, involved in osmoadaptation. In Emericella nidulans (strain FGSC A4 / ATCC 38163 / CBS 112.46 / NRRL 194 / M139) (Aspergillus nidulans), this protein is Zinc-binding alcohol dehydrogenase domain-containing protein cipB (cipB).